A 68-amino-acid polypeptide reads, in one-letter code: Tabimmunregulin 12 (68 aa).

A signal peptide spans 1–24 (MLFKSYVYFLAGLLLVGLFTSCDA). A propeptide spanning residues 25-38 (DAQYEELVPGFFRK) is cleaved from the precursor.

As to expression, expressed in salivary glands.

It is found in the secreted. Functionally, horsefly salivary gland immunosuppressant protein that likely inhibits the host inflammatory response by regulation of anti- and pro-inflammatory cytokines. When tested on mouse splenocytes in the presence of LPS, it increases the secretion of the proinflammatory cytokine interleukin-10 (IL10) and decreases the secretion of the proinflammatory cytokine interferon-gamma (IFNG) in a dose-dependent manner. This Tabanus yao (Horsefly) protein is Tabimmunregulin 12.